A 340-amino-acid polypeptide reads, in one-letter code: Terpene synthase 29 (340 aa).

Mg(2+) contacts are provided by D132, E197, N257, S261, and E265. A DDXXXXD motif motif is present at residues 132 to 138; sequence DEPDILE. Residues 257 to 265 carry the NSE/DTE motif motif; that stretch reads NDILSFYKE.

This sequence belongs to the trichodiene synthase family. Requires Mg(2+) as cofactor.

In terms of biological role, terpene cyclase that catalyzes the cyclization of farnesyl diphosphate (FPP) to a single major terpene scaffold whose chemical structure is still unknown. The sequence is that of Terpene synthase 29 from Postia placenta (strain ATCC 44394 / Madison 698-R) (Brown rot fungus).